A 302-amino-acid polypeptide reads, in one-letter code: Trans-4-hydroxy-L-proline dehydratase activating enzyme (302 aa).

In terms of domain architecture, Radical SAM core spans 14-297 (HDGPGIRSTV…KRLFEASNFN (284 aa)). Residues Cys-28, Cys-32, Cys-35, Cys-54, Cys-57, Cys-60, and Cys-93 each contribute to the [4Fe-4S] cluster site. Residue 34 to 36 (WCH) participates in S-adenosyl-L-methionine binding. 2 consecutive 4Fe-4S ferredoxin-type domains span residues 45–74 (KQVL…KGET) and 75–103 (KICL…IVGQ). Residues Gly-133, 183–185 (DIK), and His-257 each bind S-adenosyl-L-methionine.

Belongs to the organic radical-activating enzymes family. Requires [4Fe-4S] cluster as cofactor.

The catalysed reaction is glycyl-[protein] + reduced [flavodoxin] + S-adenosyl-L-methionine = glycin-2-yl radical-[protein] + semiquinone [flavodoxin] + 5'-deoxyadenosine + L-methionine + H(+). Functionally, catalyzes activation of the trans-4-hydroxy-L-proline dehydratase under anaerobic conditions by generation of an organic free radical on a glycine residue, via a homolytic cleavage of S-adenosyl-L-methionine (SAM). Is involved in the anaerobic degradation of 4-hydroxyproline. This is Trans-4-hydroxy-L-proline dehydratase activating enzyme from Clostridioides difficile (Peptoclostridium difficile).